The chain runs to 210 residues: Large ribosomal subunit protein bL25 (210 aa).

A disordered region spans residues 191–210 (KPAPKAAETDEDGEEAASEE). Over residues 199–210 (TDEDGEEAASEE) the composition is skewed to acidic residues.

It belongs to the bacterial ribosomal protein bL25 family. CTC subfamily. In terms of assembly, part of the 50S ribosomal subunit; part of the 5S rRNA/L5/L18/L25 subcomplex. Contacts the 5S rRNA. Binds to the 5S rRNA independently of L5 and L18.

Functionally, this is one of the proteins that binds to the 5S RNA in the ribosome where it forms part of the central protuberance. The protein is Large ribosomal subunit protein bL25 of Alteromonas mediterranea (strain DSM 17117 / CIP 110805 / LMG 28347 / Deep ecotype).